A 515-amino-acid chain; its full sequence is 2-isopropylmalate synthase (515 aa).

Residues 5-267 enclose the Pyruvate carboxyltransferase domain; it reads VIIFDTTLRD…DTRINTQEIH (263 aa). Residues Asp14, His202, His204, and Asn238 each contribute to the Mn(2+) site. The regulatory domain stretch occupies residues 392 to 515; it reads VLDKLSAHST…VADIKNHKHH (124 aa).

The protein belongs to the alpha-IPM synthase/homocitrate synthase family. LeuA type 1 subfamily. As to quaternary structure, homodimer. Requires Mn(2+) as cofactor.

Its subcellular location is the cytoplasm. The catalysed reaction is 3-methyl-2-oxobutanoate + acetyl-CoA + H2O = (2S)-2-isopropylmalate + CoA + H(+). Its pathway is amino-acid biosynthesis; L-leucine biosynthesis; L-leucine from 3-methyl-2-oxobutanoate: step 1/4. Catalyzes the condensation of the acetyl group of acetyl-CoA with 3-methyl-2-oxobutanoate (2-ketoisovalerate) to form 3-carboxy-3-hydroxy-4-methylpentanoate (2-isopropylmalate). The protein is 2-isopropylmalate synthase of Haemophilus influenzae (strain PittEE).